Consider the following 153-residue polypeptide: Putative tRNA (cytidine(34)-2'-O)-methyltransferase (153 aa).

Residues Gly102, Ile122, and Ser131 each coordinate S-adenosyl-L-methionine.

The protein belongs to the class IV-like SAM-binding methyltransferase superfamily. RNA methyltransferase TrmH family. TrmL subfamily.

It localises to the cytoplasm. It catalyses the reaction cytidine(34) in tRNA + S-adenosyl-L-methionine = 2'-O-methylcytidine(34) in tRNA + S-adenosyl-L-homocysteine + H(+). The catalysed reaction is 5-carboxymethylaminomethyluridine(34) in tRNA(Leu) + S-adenosyl-L-methionine = 5-carboxymethylaminomethyl-2'-O-methyluridine(34) in tRNA(Leu) + S-adenosyl-L-homocysteine + H(+). Functionally, could methylate the ribose at the nucleotide 34 wobble position in tRNA. The polypeptide is Putative tRNA (cytidine(34)-2'-O)-methyltransferase (Synechocystis sp. (strain ATCC 27184 / PCC 6803 / Kazusa)).